The sequence spans 464 residues: ATP synthase subunit beta (464 aa).

153–160 (GGAGVGKT) contacts ATP.

The protein belongs to the ATPase alpha/beta chains family. F-type ATPases have 2 components, CF(1) - the catalytic core - and CF(0) - the membrane proton channel. CF(1) has five subunits: alpha(3), beta(3), gamma(1), delta(1), epsilon(1). CF(0) has three main subunits: a(1), b(2) and c(9-12). The alpha and beta chains form an alternating ring which encloses part of the gamma chain. CF(1) is attached to CF(0) by a central stalk formed by the gamma and epsilon chains, while a peripheral stalk is formed by the delta and b chains.

Its subcellular location is the cell inner membrane. It carries out the reaction ATP + H2O + 4 H(+)(in) = ADP + phosphate + 5 H(+)(out). Functionally, produces ATP from ADP in the presence of a proton gradient across the membrane. The catalytic sites are hosted primarily by the beta subunits. In Burkholderia cenocepacia (strain ATCC BAA-245 / DSM 16553 / LMG 16656 / NCTC 13227 / J2315 / CF5610) (Burkholderia cepacia (strain J2315)), this protein is ATP synthase subunit beta.